Consider the following 64-residue polypeptide: Conotoxin Mr3.5 (64 aa).

Positions 1–19 (MSKLGVLLTICLLLFPLTA) are cleaved as a signal peptide. Residues 20–46 (LPLDGDQPADQRAERTQAEKHSLPDPR) constitute a propeptide that is removed on maturation. Disulfide bonds link cysteine 49–cysteine 58, cysteine 50–cysteine 62, and cysteine 54–cysteine 63. Cysteine 63 bears the Cysteine amide mark.

Belongs to the conotoxin M superfamily. Expressed by the venom duct.

The protein resides in the secreted. This chain is Conotoxin Mr3.5, found in Conus marmoreus (Marble cone).